A 285-amino-acid polypeptide reads, in one-letter code: Bifunctional protein FolD (285 aa).

NADP(+) contacts are provided by residues Gly-166–Ser-168 and Ile-232.

This sequence belongs to the tetrahydrofolate dehydrogenase/cyclohydrolase family. Homodimer.

The enzyme catalyses (6R)-5,10-methylene-5,6,7,8-tetrahydrofolate + NADP(+) = (6R)-5,10-methenyltetrahydrofolate + NADPH. It catalyses the reaction (6R)-5,10-methenyltetrahydrofolate + H2O = (6R)-10-formyltetrahydrofolate + H(+). It functions in the pathway one-carbon metabolism; tetrahydrofolate interconversion. Functionally, catalyzes the oxidation of 5,10-methylenetetrahydrofolate to 5,10-methenyltetrahydrofolate and then the hydrolysis of 5,10-methenyltetrahydrofolate to 10-formyltetrahydrofolate. This chain is Bifunctional protein FolD, found in Actinobacillus succinogenes (strain ATCC 55618 / DSM 22257 / CCUG 43843 / 130Z).